A 322-amino-acid chain; its full sequence is ATP-dependent 6-phosphofructokinase (322 aa).

Residue Gly-11 participates in ATP binding. 21–25 (RAVTR) contacts ADP. Residues 72 to 73 (RC) and 102 to 105 (GDGS) contribute to the ATP site. Asp-103 serves as a coordination point for Mg(2+). 127–129 (TID) contributes to the substrate binding site. Catalysis depends on Asp-129, which acts as the Proton acceptor. Arg-156 is an ADP binding site. Substrate is bound by residues Arg-164 and 171-173 (MGR). Residues 187–189 (GAE), Arg-213, and 215–217 (KKH) contribute to the ADP site. Residues Glu-224, Arg-245, and 251-254 (HIQR) contribute to the substrate site.

The protein belongs to the phosphofructokinase type A (PFKA) family. ATP-dependent PFK group I subfamily. Prokaryotic clade 'B1' sub-subfamily. As to quaternary structure, homotetramer. It depends on Mg(2+) as a cofactor.

The protein localises to the cytoplasm. The enzyme catalyses beta-D-fructose 6-phosphate + ATP = beta-D-fructose 1,6-bisphosphate + ADP + H(+). Its pathway is carbohydrate degradation; glycolysis; D-glyceraldehyde 3-phosphate and glycerone phosphate from D-glucose: step 3/4. Allosterically activated by ADP and other diphosphonucleosides, and allosterically inhibited by phosphoenolpyruvate. Functionally, catalyzes the phosphorylation of D-fructose 6-phosphate to fructose 1,6-bisphosphate by ATP, the first committing step of glycolysis. The chain is ATP-dependent 6-phosphofructokinase from Staphylococcus epidermidis (strain ATCC 35984 / DSM 28319 / BCRC 17069 / CCUG 31568 / BM 3577 / RP62A).